The sequence spans 733 residues: Neutral ceramidase 3 (733 aa).

The first 25 residues, 1 to 25 (MTRWSMSMHCTLFLLFLLRLTCIFS), serve as a signal peptide directing secretion. The active-site Nucleophile is the serine 307. Asparagine 325 carries N-linked (GlcNAc...) asparagine glycosylation.

It belongs to the neutral ceramidase family.

It localises to the secreted. It is found in the endoplasmic reticulum. The protein localises to the golgi apparatus. The enzyme catalyses an N-acylsphing-4-enine + H2O = sphing-4-enine + a fatty acid. In terms of biological role, hydrolyzes the sphingolipid ceramide into sphingosine and free fatty acid. Promotes oxidative stress resistance. This is Neutral ceramidase 3 from Arabidopsis thaliana (Mouse-ear cress).